Reading from the N-terminus, the 267-residue chain is Translation initiation factor 2 subunit alpha (267 aa).

An S1 motif domain is found at G12–K83.

Belongs to the eIF-2-alpha family. Heterotrimer composed of an alpha, a beta and a gamma chain.

Functionally, eIF-2 functions in the early steps of protein synthesis by forming a ternary complex with GTP and initiator tRNA. The polypeptide is Translation initiation factor 2 subunit alpha (Hyperthermus butylicus (strain DSM 5456 / JCM 9403 / PLM1-5)).